Reading from the N-terminus, the 38-residue chain is MKKFLTTAPVVAAIWFTATAGILIEWNRFFPDLLFHPM.

Residues 4–24 (FLTTAPVVAAIWFTATAGILI) form a helical membrane-spanning segment.

Belongs to the PsaJ family.

It is found in the cellular thylakoid membrane. Its function is as follows. May help in the organization of the PsaE and PsaF subunits. The chain is Photosystem I reaction center subunit IX from Synechococcus sp. (strain CC9902).